The chain runs to 90 residues: Small ribosomal subunit protein bS16 (90 aa).

This sequence belongs to the bacterial ribosomal protein bS16 family.

This Lysinibacillus sphaericus (strain C3-41) protein is Small ribosomal subunit protein bS16.